The primary structure comprises 329 residues: Mas-related G-protein coupled receptor member X2 (329 aa).

The Extracellular portion of the chain corresponds to 1–33; it reads MDPTTPAWGTESTTMNGNDQALPLFCGKETLIS. The chain crosses the membrane as a helical span at residues 34-54; the sequence is VFLILFIALVGLVGNGFVLWL. At 55–63 the chain is on the cytoplasmic side; the sequence is LGFRMRKNA. The helical transmembrane segment at 64–84 threads the bilayer; the sequence is FSVYVLSLAGADFLFLCFQII. At 85–96 the chain is on the extracellular side; that stretch reads NCLVYLSNVFCS. A helical transmembrane segment spans residues 97–117; it reads ISINFPSFFITVMTCAYLAGL. Residues 118–144 lie on the Cytoplasmic side of the membrane; that stretch reads SMLSTISTERCLSVLWPIWYRCRRPRH. A helical transmembrane segment spans residues 145–165; the sequence is LSAVACVLLWALSLLLSILEG. Residues 166–183 lie on the Extracellular side of the membrane; it reads KFCGLFGDGDSGWCQTFD. Residues 184–204 traverse the membrane as a helical segment; it reads LITAAWLIFLFMVLCGSSLAL. Residues 205-227 lie on the Cytoplasmic side of the membrane; it reads LVRILCGSRGLPLTRLYLTILLT. Residues 228–248 form a helical membrane-spanning segment; it reads VLVFLLCGLPFGIQWFLILWI. At 249 to 263 the chain is on the extracellular side; sequence WKNSDVLFCHIHPVS. Residues 264–284 traverse the membrane as a helical segment; it reads VVLSSLNSSANPIIYFFVGSF. The Cytoplasmic portion of the chain corresponds to 285–329; sequence RKQWRLQQPILKLALQRALQDIAEVDHSEGCFRQGTPEMSRSSLV.

The protein belongs to the G-protein coupled receptor 1 family. Mas subfamily.

Its subcellular location is the cell membrane. Functionally, mast cell-specific receptor for basic secretagogues, i.e. cationic amphiphilic drugs, as well as endo- or exogenous peptides, consisting of a basic head group and a hydrophobic core. Recognizes and binds small molecules containing a cyclized tetrahydroisoquinoline (THIQ), such as non-steroidal neuromuscular blocking drugs (NMBDs), including tubocurarine and atracurium. In response to these compounds, mediates pseudo-allergic reactions characterized by histamine release, inflammation and airway contraction. In Pan troglodytes (Chimpanzee), this protein is Mas-related G-protein coupled receptor member X2 (MRGPRX2).